A 375-amino-acid chain; its full sequence is MSTAGKVIKCRAAVLWEKNKPFSIEEVEVAPPKAYEVRIKIVATGICRSDDHVVNGSIITPLPAILGHEAGGIVESIGEGVTTVKPGDKVIPLFVPQCGKCRACKHPESNLCTHGDLGRAQGTLMDGTSRFTCKGKPIHHFLGVTTFSEYTVVSEISVTKIDAASPLEKVCLIGCGFSTGYGSAVKVGKVARGSICACVWSGRVGLSAIIGCKAAGAARIIAVDINKDKFAKAKELGATECVNPQDYDKPIYEVLQEMTDGGVDFSFEVIGRLDTKVSALMCCQESHGVSVIVGVPPNAQSLTIDPKVLLSGRSWKGAVFGGYKGKDDVPKLVADFMAKKFPLEPLITNVFPLAKINEGFDLLRAGKSIRTVLTF.

An N-acetylserine modification is found at Ser2. Zn(2+) contacts are provided by Cys47, His68, Cys98, Cys101, Cys104, Cys112, and Cys175. NAD(+) is bound by residues 200–205, Asp224, and Lys229; that span reads WSGRVG. Lys234 is subject to N6-succinyllysine. 293 to 295 serves as a coordination point for NAD(+); that stretch reads VGV. Lys340 is subject to N6-succinyllysine. Arg370 contributes to the NAD(+) binding site.

This sequence belongs to the zinc-containing alcohol dehydrogenase family. Class-I subfamily. Homodimer. Zn(2+) is required as a cofactor.

Its subcellular location is the cytoplasm. It catalyses the reaction a primary alcohol + NAD(+) = an aldehyde + NADH + H(+). The enzyme catalyses a secondary alcohol + NAD(+) = a ketone + NADH + H(+). The chain is Alcohol dehydrogenase 1 (ADH1) from Geomys attwateri (Attwater's pocket gopher).